Reading from the N-terminus, the 465-residue chain is VGFKAGVKDYKLTYYTPDYETKDTDILAAFRVTPQPGVPPEEAGAAVAAESSTGTWTTVWTDGLTSLDRYKGRCYHIEPVAGEENQYIAYVAYPLDLFEEGSVTNMFTSIVGNVFGFKALRALRLEDLRIPPAYSKTFQGPPHGIQVERDKLNKYGRPLLGCTIKPKLGLSAKNYGRAVYECLRGGLDFTKDDENVNSQPFMRWRDRFLFCAEALYKAQAETGEIKGHYLNATAGTCEEMIKRAVFARELGVPIVMHDYLTGGFTANTSLAHYCRDNGLLLHIHRAMHAVIDRQKNHGMHFRVLAKALRLSGGDHIHAGTVVGKLEGERDITLGFVDLLRDDFIEKDRSRGIYFTQDWVSLPGVIPVASGGIHVWHMPALTEIFGDDSVLQFGGGTLGHPWGNAPGAVANRVALEACVKARNEGRDLAREGNEIIREASKWSPELAAACEVWKEIKFEFPAMDTL.

An N6,N6,N6-trimethyllysine modification is found at K4. N113 and T163 together coordinate substrate. K165 serves as the catalytic Proton acceptor. A substrate-binding site is contributed by K167. Residues K191, D193, and E194 each contribute to the Mg(2+) site. K191 is subject to N6-carboxylysine. The active-site Proton acceptor is H284. R285, H317, and S369 together coordinate substrate.

It belongs to the RuBisCO large chain family. Type I subfamily. Heterohexadecamer of 8 large chains and 8 small chains; disulfide-linked. The disulfide link is formed within the large subunit homodimers. Requires Mg(2+) as cofactor. The disulfide bond which can form in the large chain dimeric partners within the hexadecamer appears to be associated with oxidative stress and protein turnover.

It localises to the plastid. The protein resides in the chloroplast. It carries out the reaction 2 (2R)-3-phosphoglycerate + 2 H(+) = D-ribulose 1,5-bisphosphate + CO2 + H2O. The catalysed reaction is D-ribulose 1,5-bisphosphate + O2 = 2-phosphoglycolate + (2R)-3-phosphoglycerate + 2 H(+). Its function is as follows. RuBisCO catalyzes two reactions: the carboxylation of D-ribulose 1,5-bisphosphate, the primary event in carbon dioxide fixation, as well as the oxidative fragmentation of the pentose substrate in the photorespiration process. Both reactions occur simultaneously and in competition at the same active site. In Humiria balsamifera (Tauroniro), this protein is Ribulose bisphosphate carboxylase large chain.